The chain runs to 842 residues: DNA gyrase subunit A (842 aa).

The Topo IIA-type catalytic domain occupies 42–511 (LPEVRDGLKP…ADGEVSDEDL (470 aa)). Tyr130 (O-(5'-phospho-DNA)-tyrosine intermediate) is an active-site residue. The short motif at 538–544 (QKRGGKG) is the GyrA-box element. Residues 822-842 (EDEAAESISESDADTAESPEA) form a disordered region.

Belongs to the type II topoisomerase GyrA/ParC subunit family. As to quaternary structure, heterotetramer, composed of two GyrA and two GyrB chains. In the heterotetramer, GyrA contains the active site tyrosine that forms a transient covalent intermediate with DNA, while GyrB binds cofactors and catalyzes ATP hydrolysis.

Its subcellular location is the cytoplasm. It catalyses the reaction ATP-dependent breakage, passage and rejoining of double-stranded DNA.. Inhibited by 4-quinoline drugs (nalidixic acid, ciprofloxacin, ofloxacin), although it is much less sensitive than the corresponding enzyme from E.coli. Its function is as follows. A type II topoisomerase that negatively supercoils closed circular double-stranded (ds) DNA in an ATP-dependent manner to modulate DNA topology and maintain chromosomes in an underwound state. Negative supercoiling favors strand separation, and DNA replication, transcription, recombination and repair, all of which involve strand separation. Also able to catalyze the interconversion of other topological isomers of dsDNA rings, including catenanes and knotted rings. Type II topoisomerases break and join 2 DNA strands simultaneously in an ATP-dependent manner. The protein is DNA gyrase subunit A of Mycolicibacterium smegmatis (strain ATCC 700084 / mc(2)155) (Mycobacterium smegmatis).